Reading from the N-terminus, the 443-residue chain is MVMEKLGDSLQGALKKLIGAGRIDERTVNEVVKDIQRALLQADVNVKLVMGMSQRIKERAMKEAPPAGMNPREHVIRIVYQELMEIIGKGAEIQLKPQIIMMVGLQGSGKTTSTAKLARYFQRKGLKAGVVAADTFRPGAYHQLKTLCEKLNVAFYGEENNPDAVEITRNGLKALEKYDVKIVDTAGRHALEADLIEEMEQINAVAKPDHKFMVLDAGIGQQASQQAHAFNDSVGITGVIITKLDGTAKGGGALSAVSETKAPIAFIGVGETPEDFEKFEADRFISRLLGMGDLKSLMEKAEETLSEEDVNVEALMQGRFTLKDMYKQLEAMNKMGPLKQIMSMLPLGMGGMGGVKLSDEMFQATSDKMKNYKTIMDSMTEEEMTDPKLIGGSRIKRISRGSGCSPEEVRELLKYHKTMQTALKGFRGGKFNIQKMMKKRLGM.

Residues 104–111 (GLQGSGKT), 184–188 (DTAGR), and 242–245 (TKLD) each bind GTP.

This sequence belongs to the GTP-binding SRP family. SRP54 subfamily. In terms of assembly, part of the signal recognition particle protein translocation system, which is composed of SRP and FtsY. Archaeal SRP consists of a 7S RNA molecule of 300 nucleotides and two protein subunits: SRP54 and SRP19.

It is found in the cytoplasm. The enzyme catalyses GTP + H2O = GDP + phosphate + H(+). Functionally, involved in targeting and insertion of nascent membrane proteins into the cytoplasmic membrane. Binds to the hydrophobic signal sequence of the ribosome-nascent chain (RNC) as it emerges from the ribosomes. The SRP-RNC complex is then targeted to the cytoplasmic membrane where it interacts with the SRP receptor FtsY. The polypeptide is Signal recognition particle 54 kDa protein (Methanosarcina barkeri (strain Fusaro / DSM 804)).